Here is a 107-residue protein sequence, read N- to C-terminus: Glutaredoxin 4 (107 aa).

The 103-residue stretch at 4 to 106 (IEKIERQIKD…KIISNAVLNS (103 aa)) folds into the Glutaredoxin domain. Residue Lys-21 participates in glutathione binding. A [2Fe-2S] cluster-binding site is contributed by Cys-29. Glutathione-binding positions include Arg-58, Phe-70, and 83–84 (CS).

This sequence belongs to the glutaredoxin family. Monothiol subfamily. As to quaternary structure, homodimer.

The protein localises to the cytoplasm. Monothiol glutaredoxin involved in the biogenesis of iron-sulfur clusters. This is Glutaredoxin 4 (grxD) from Buchnera aphidicola subsp. Schizaphis graminum (strain Sg).